The primary structure comprises 69 residues: Cytochrome c oxidase subunit 8A, mitochondrial (69 aa).

The transit peptide at methionine 1–lysine 25 directs the protein to the mitochondrion. The SIFI-degron motif lies at serine 2 to leucine 19. Topologically, residues isoleucine 26–glycine 36 are mitochondrial matrix. Residues isoleucine 37 to serine 60 form a helical membrane-spanning segment. The Mitochondrial intermembrane portion of the chain corresponds to histidine 61–glutamate 69.

It belongs to the cytochrome c oxidase VIII family. In terms of assembly, component of the cytochrome c oxidase (complex IV, CIV), a multisubunit enzyme composed of 14 subunits. The complex is composed of a catalytic core of 3 subunits MT-CO1, MT-CO2 and MT-CO3, encoded in the mitochondrial DNA, and 11 supernumerary subunits COX4I, COX5A, COX5B, COX6A, COX6B, COX6C, COX7A, COX7B, COX7C, COX8 and NDUFA4, which are encoded in the nuclear genome. The complex exists as a monomer or a dimer and forms supercomplexes (SCs) in the inner mitochondrial membrane with NADH-ubiquinone oxidoreductase (complex I, CI) and ubiquinol-cytochrome c oxidoreductase (cytochrome b-c1 complex, complex III, CIII), resulting in different assemblies (supercomplex SCI(1)III(2)IV(1) and megacomplex MCI(2)III(2)IV(2)). Post-translationally, in response to mitochondrial stress, the precursor protein is ubiquitinated by the SIFI complex in the cytoplasm before mitochondrial import, leading to its degradation. Within the SIFI complex, UBR4 initiates ubiquitin chain that are further elongated or branched by KCMF1.

The protein localises to the mitochondrion inner membrane. It functions in the pathway energy metabolism; oxidative phosphorylation. Its function is as follows. Component of the cytochrome c oxidase, the last enzyme in the mitochondrial electron transport chain which drives oxidative phosphorylation. The respiratory chain contains 3 multisubunit complexes succinate dehydrogenase (complex II, CII), ubiquinol-cytochrome c oxidoreductase (cytochrome b-c1 complex, complex III, CIII) and cytochrome c oxidase (complex IV, CIV), that cooperate to transfer electrons derived from NADH and succinate to molecular oxygen, creating an electrochemical gradient over the inner membrane that drives transmembrane transport and the ATP synthase. Cytochrome c oxidase is the component of the respiratory chain that catalyzes the reduction of oxygen to water. Electrons originating from reduced cytochrome c in the intermembrane space (IMS) are transferred via the dinuclear copper A center (CU(A)) of subunit 2 and heme A of subunit 1 to the active site in subunit 1, a binuclear center (BNC) formed by heme A3 and copper B (CU(B)). The BNC reduces molecular oxygen to 2 water molecules using 4 electrons from cytochrome c in the IMS and 4 protons from the mitochondrial matrix. The sequence is that of Cytochrome c oxidase subunit 8A, mitochondrial (COX8A) from Gorilla gorilla gorilla (Western lowland gorilla).